We begin with the raw amino-acid sequence, 622 residues long: Dehydrogenase xptC (622 aa).

An N-terminal signal peptide occupies residues 1–18 (MAKLSVILLFRSLLLCGA). Residues 47–48 (VS), 68–69 (EA), and 123–126 (NAMI) contribute to the FAD site. N-linked (GlcNAc...) asparagine glycans are attached at residues asparagine 160, asparagine 173, asparagine 357, asparagine 364, and asparagine 480. 598–599 (PM) provides a ligand contact to FAD.

Belongs to the GMC oxidoreductase family. In terms of assembly, homodimer. The cofactor is FAD.

It functions in the pathway secondary metabolite biosynthesis. Dehydrogenase involved in the conversion of monodictyphenone to the prenyl xanthones such as emericellin, shamixanthone and epishamixanthone. Monodictyphenone is first converted to variecoxanthone A via a paeciloxanthone intermediate by the consecutive actions of the FAD-dependent monooxygenase mdpD and the xanthone prenyltransferase xptB. XptB catalyzes regular O-prenylation at the hydroxy group of C-7 of the xanthone ring. Variecoxanthone A is further prenylated to emericellin by xptA before being reduced to shamixanthone and epishamixanthone by the dehydrogenase xptC. This chain is Dehydrogenase xptC, found in Emericella nidulans (strain FGSC A4 / ATCC 38163 / CBS 112.46 / NRRL 194 / M139) (Aspergillus nidulans).